Reading from the N-terminus, the 648-residue chain is Indolepyruvate oxidoreductase subunit IorA (648 aa).

2 4Fe-4S ferredoxin-type domains span residues 585–614 (PIYQ…WDAE) and 616–645 (KKAR…KVRE). [4Fe-4S] cluster-binding residues include cysteine 594, cysteine 597, cysteine 600, cysteine 606, cysteine 625, cysteine 628, cysteine 631, and cysteine 635.

As to quaternary structure, heterodimer of the IorA and IorB subunits. Requires [4Fe-4S] cluster as cofactor.

The enzyme catalyses indole-3-pyruvate + 2 oxidized [2Fe-2S]-[ferredoxin] + CoA = (indol-3-yl)acetyl-CoA + 2 reduced [2Fe-2S]-[ferredoxin] + CO2 + H(+). Catalyzes the ferredoxin-dependent oxidative decarboxylation of arylpyruvates. The protein is Indolepyruvate oxidoreductase subunit IorA (iorA) of Pyrococcus horikoshii (strain ATCC 700860 / DSM 12428 / JCM 9974 / NBRC 100139 / OT-3).